The following is a 363-amino-acid chain: Flagellar P-ring protein 2 (363 aa).

The first 20 residues, 1–20 (MKLRTCCISLMLLLALPLQA), serve as a signal peptide directing secretion.

It belongs to the FlgI family. In terms of assembly, the basal body constitutes a major portion of the flagellar organelle and consists of four rings (L,P,S, and M) mounted on a central rod.

It localises to the periplasm. The protein localises to the bacterial flagellum basal body. Its function is as follows. Assembles around the rod to form the L-ring and probably protects the motor/basal body from shearing forces during rotation. This chain is Flagellar P-ring protein 2, found in Photobacterium profundum (strain SS9).